Here is a 351-residue protein sequence, read N- to C-terminus: GDSL esterase/lipase At3g14820 (351 aa).

A signal peptide spans 1–22 (MDLHLIGFLLWFFVVQVTTSSA). Residue asparagine 25 is glycosylated (N-linked (GlcNAc...) asparagine). Catalysis depends on serine 39, which acts as the Nucleophile. Catalysis depends on residues aspartate 325 and histidine 328.

Belongs to the 'GDSL' lipolytic enzyme family.

The protein localises to the secreted. This Arabidopsis thaliana (Mouse-ear cress) protein is GDSL esterase/lipase At3g14820.